Here is a 378-residue protein sequence, read N- to C-terminus: Quinolinate synthase (378 aa).

Iminosuccinate contacts are provided by H59 and S80. C125 is a binding site for [4Fe-4S] cluster. Iminosuccinate-binding positions include Y151–N153 and S168. A [4Fe-4S] cluster-binding site is contributed by C212. Iminosuccinate-binding positions include H238–E240 and T255. C309 is a [4Fe-4S] cluster binding site.

Belongs to the quinolinate synthase family. Type 1 subfamily. [4Fe-4S] cluster serves as cofactor.

Its subcellular location is the cytoplasm. It carries out the reaction iminosuccinate + dihydroxyacetone phosphate = quinolinate + phosphate + 2 H2O + H(+). The protein operates within cofactor biosynthesis; NAD(+) biosynthesis; quinolinate from iminoaspartate: step 1/1. Its function is as follows. Catalyzes the condensation of iminoaspartate with dihydroxyacetone phosphate to form quinolinate. The chain is Quinolinate synthase from Burkholderia lata (strain ATCC 17760 / DSM 23089 / LMG 22485 / NCIMB 9086 / R18194 / 383).